The following is a 55-amino-acid chain: Large ribosomal subunit protein bL33 (55 aa).

Belongs to the bacterial ribosomal protein bL33 family.

The sequence is that of Large ribosomal subunit protein bL33 from Buchnera aphidicola subsp. Schizaphis graminum (strain Sg).